Reading from the N-terminus, the 413-residue chain is Oxidoreductase vrtI (413 aa).

The 107-residue stretch at 235 to 341 (DAESLTTLSM…RYSIAYFLRA (107 aa)) folds into the Fe2OG dioxygenase domain. Fe cation is bound by residues histidine 262, aspartate 264, and histidine 319. Arginine 332 contacts 2-oxoglutarate.

It belongs to the iron/ascorbate-dependent oxidoreductase family.

It participates in secondary metabolite biosynthesis; terpenoid biosynthesis. Functionally, oxidoreductase; part of the gene cluster that mediates the biosynthesis of viridicatumtoxin, a tetracycline-like fungal meroterpenoid with a unique, fused spirobicyclic ring system. The first step of the pathway is the production of the malonamoyl-CoA starter unit for the polyketide synthase vrtA. The aldolase vrtJ may be involved in the synthesis of the malonamate substrate for malonamoyl-CoA synthetase vrtB. The polyketide synthase vrtA then may utilize the malonamoyl-CoA starter unit, followed by sequential condensation of eight malonyl-CoA units to form the polyketide backbone. The cyclization of the last ring could be mediated by the lactamase-like protein vrtG. The proposed post-PKS tailoring steps are a hydroxylation at C5 catalyzed the cytochrome P450 monooxygenase vrtE, a hydroxylation at C12a catalyzed by VrtH and/or VrtI, and an O-methylation by the O-methyltransferase vrtF. VrtC is then proposed to catalyze the transfer of a geranyl group synthesized by vrtD to the aromatic C ring of the tetracyclic polyketide intermediate of viridicatumtoxin to yield previridicatumtoxin. Finally, the cytochrome P450 monooxygenase vrtK catalyzes the spirocyclization of the geranyl moiety of previridicatumtoxin to afford viridicatumtoxin. In Penicillium aethiopicum, this protein is Oxidoreductase vrtI.